The primary structure comprises 138 residues: Holo-[acyl-carrier-protein] synthase (138 aa).

Mg(2+)-binding residues include Asp8 and Glu54.

Belongs to the P-Pant transferase superfamily. AcpS family. Requires Mg(2+) as cofactor.

Its subcellular location is the cytoplasm. It carries out the reaction apo-[ACP] + CoA = holo-[ACP] + adenosine 3',5'-bisphosphate + H(+). Transfers the 4'-phosphopantetheine moiety from coenzyme A to a Ser of acyl-carrier-protein. The sequence is that of Holo-[acyl-carrier-protein] synthase from Roseiflexus sp. (strain RS-1).